The chain runs to 147 residues: MEIRRADKDDLDDFVRVYVESYRGLEDYAYTRKRDVKNYFKWLLSRDKDGVMVAEIDGEAVGFVACDTNWFSIFERKKVGEIHELFVLPEFRGEGIGAKLMEKALEYALERNRKVAELWVGRTNYRARRFYASQDLRRPESGGSGSE.

The N-acetyltransferase domain occupies 1-147; that stretch reads MEIRRADKDD…RPESGGSGSE (147 aa).

It belongs to the acetyltransferase family.

This is an uncharacterized protein from Archaeoglobus fulgidus (strain ATCC 49558 / DSM 4304 / JCM 9628 / NBRC 100126 / VC-16).